The following is a 618-amino-acid chain: Probable Xaa-Pro aminopeptidase P (618 aa).

Asp-415, Asp-426, Glu-524, and Glu-538 together coordinate Mn(2+).

It belongs to the peptidase M24B family. Mn(2+) is required as a cofactor.

It catalyses the reaction Release of any N-terminal amino acid, including proline, that is linked to proline, even from a dipeptide or tripeptide.. Its function is as follows. Catalyzes the removal of a penultimate prolyl residue from the N-termini of peptides. The chain is Probable Xaa-Pro aminopeptidase P (AMPP) from Pyricularia oryzae (strain 70-15 / ATCC MYA-4617 / FGSC 8958) (Rice blast fungus).